Consider the following 118-residue polypeptide: Basic phospholipase A2 PA-15 (118 aa).

7 disulfide bridges follow: cysteine 11-cysteine 71, cysteine 27-cysteine 117, cysteine 29-cysteine 45, cysteine 44-cysteine 98, cysteine 51-cysteine 91, cysteine 60-cysteine 84, and cysteine 78-cysteine 89. Positions 28, 30, and 32 each coordinate Ca(2+). The active site involves histidine 48. Ca(2+) is bound at residue aspartate 49. Aspartate 92 is a catalytic residue.

The protein belongs to the phospholipase A2 family. Group I subfamily. D49 sub-subfamily. Ca(2+) is required as a cofactor. Expressed by the venom gland.

It localises to the secreted. It catalyses the reaction a 1,2-diacyl-sn-glycero-3-phosphocholine + H2O = a 1-acyl-sn-glycero-3-phosphocholine + a fatty acid + H(+). Functionally, PLA2 catalyzes the calcium-dependent hydrolysis of the 2-acyl groups in 3-sn-phosphoglycerides. This chain is Basic phospholipase A2 PA-15, found in Pseudechis australis (Mulga snake).